Here is a 583-residue protein sequence, read N- to C-terminus: Ferredoxin--nitrite reductase, chloroplastic (583 aa).

A chloroplast-targeting transit peptide spans methionine 1–arginine 22. Positions 461, 467, 502, and 506 each coordinate [4Fe-4S] cluster. Cysteine 506 lines the siroheme pocket.

The protein belongs to the nitrite and sulfite reductase 4Fe-4S domain family. In terms of assembly, monomer. Requires siroheme as cofactor. [4Fe-4S] cluster is required as a cofactor.

Its subcellular location is the plastid. It is found in the chloroplast. The catalysed reaction is 6 oxidized [2Fe-2S]-[ferredoxin] + NH4(+) + 2 H2O = nitrite + 6 reduced [2Fe-2S]-[ferredoxin] + 8 H(+). The protein operates within nitrogen metabolism; nitrate reduction (assimilation). This chain is Ferredoxin--nitrite reductase, chloroplastic (NIR1), found in Betula pendula (European white birch).